The sequence spans 307 residues: Metapyrocatechase (307 aa).

2 consecutive VOC domains span residues 7–122 and 150–269; these read RPGH…LYAD and RFDH…VFCG. His-153, His-214, and Glu-265 together coordinate Fe cation.

Belongs to the extradiol ring-cleavage dioxygenase family. Homotetramer. Fe(2+) is required as a cofactor.

It carries out the reaction catechol + O2 = (2Z,4E)-2-hydroxy-6-oxohexa-2,4-dienoate + H(+). Its pathway is xenobiotic degradation; toluene degradation. The protein is Metapyrocatechase (xylE) of Pseudomonas putida (Arthrobacter siderocapsulatus).